The following is a 728-amino-acid chain: E3 ubiquitin-protein ligase LNX (728 aa).

The RING-type zinc-finger motif lies at 45–83; the sequence is CHICLQALLDPLDTPCGHTYCTLCLTNFLVEKDFCPVDR. An NPXY motif motif is present at residues 185–188; it reads NPAY. The interval 185-220 is disordered; the sequence is NPAYVSSVEDGEPVANSSDSGRSNRTRARPFERSTM. The segment at 186-244 is interaction with MAGEB18; it reads PAYVSSVEDGEPVANSSDSGRSNRTRARPFERSTMRSRSFKKINRALSALRRTKSGSVV. PDZ domains follow at residues 278–362 and 385–467; these read SIKI…VLRE and HVIL…VSRQ. Residue Ser445 is modified to Phosphoserine. The tract at residues 481–500 is disordered; sequence WISNGQQSPGPGERNTASKP. PDZ domains are found at residues 508-593 and 638-723; these read VVSV…ALEV and DVIL…IASW.

As to quaternary structure, interacts with CXADR. Interacts with MAGEB18 and MAGEF1. Interacts with the phosphotyrosine interaction domain of all isoforms of NUMB. IGSF5/JAM4 interacts with isoform 2 through the second PDZ domain, other isoforms may also interact with IGSF5/JAM4. Isoform 1 and isoform 2 are expressed in the heart. Isoform 1 is also expressed in kidney, lung and skeletal muscle while isoform 2 is also expressed in brain.

The protein resides in the cytoplasm. The enzyme catalyses S-ubiquitinyl-[E2 ubiquitin-conjugating enzyme]-L-cysteine + [acceptor protein]-L-lysine = [E2 ubiquitin-conjugating enzyme]-L-cysteine + N(6)-ubiquitinyl-[acceptor protein]-L-lysine.. The protein operates within protein modification; protein ubiquitination. In terms of biological role, E3 ubiquitin-protein ligase that mediates ubiquitination and subsequent proteasomal degradation of NUMB. E3 ubiquitin ligases accept ubiquitin from an E2 ubiquitin-conjugating enzyme in the form of a thioester and then directly transfers the ubiquitin to targeted substrates. Mediates ubiquitination of isoform p66 and isoform p72 of NUMB, but not that of isoform p71 or isoform p65. Functionally, isoform 2 provides an endocytic scaffold for IGSF5/JAM4. The sequence is that of E3 ubiquitin-protein ligase LNX (Lnx1) from Mus musculus (Mouse).